The primary structure comprises 446 residues: Maltoporin (446 aa).

Positions 1–25 (MMTTLRKLPLAVAVAAGMMSVQAMA) are cleaved as a signal peptide.

It belongs to the porin LamB (TC 1.B.3) family. Homotrimer formed of three 18-stranded antiparallel beta-barrels, containing three independent channels.

It localises to the cell outer membrane. The catalysed reaction is beta-maltose(in) = beta-maltose(out). Its function is as follows. Involved in the transport of maltose and maltodextrins. This Escherichia fergusonii (strain ATCC 35469 / DSM 13698 / CCUG 18766 / IAM 14443 / JCM 21226 / LMG 7866 / NBRC 102419 / NCTC 12128 / CDC 0568-73) protein is Maltoporin.